A 144-amino-acid chain; its full sequence is 3-dehydroquinate dehydratase (144 aa).

The Proton acceptor role is filled by Tyr-24. 3 residues coordinate substrate: Asn-73, His-79, and Asp-86. His-99 (proton donor) is an active-site residue. Substrate is bound by residues Leu-100–Ser-101 and Arg-110.

It belongs to the type-II 3-dehydroquinase family. As to quaternary structure, homododecamer.

The enzyme catalyses 3-dehydroquinate = 3-dehydroshikimate + H2O. The protein operates within metabolic intermediate biosynthesis; chorismate biosynthesis; chorismate from D-erythrose 4-phosphate and phosphoenolpyruvate: step 3/7. In terms of biological role, catalyzes a trans-dehydration via an enolate intermediate. The protein is 3-dehydroquinate dehydratase of Shewanella putrefaciens (strain CN-32 / ATCC BAA-453).